The following is a 198-amino-acid chain: Charged multivesicular body protein 2a homolog 2 (198 aa).

Residues 11–42 (KEVLRENQRNLNKSMREIDRERVALQNQEKKI) are a coiled coil.

This sequence belongs to the SNF7 family. Probable core component of the endosomal sorting required for transport complex III (ESCRT-III). ESCRT-III components are thought to multimerize to form a flat lattice on the perimeter membrane of the endosome.

It is found in the endosome membrane. Probable core component of the endosomal sorting required for transport complex III (ESCRT-III) which is involved in multivesicular bodies (MVBs) formation and sorting of endosomal cargo proteins into MVBs. MVBs contain intraluminal vesicles (ILVs) that are generated by invagination and scission from the limiting membrane of the endosome and are delivered to lysosomes enabling degradation of membrane proteins. This is Charged multivesicular body protein 2a homolog 2 (chmp2a2) from Dictyostelium discoideum (Social amoeba).